The following is a 151-amino-acid chain: Ribosome maturation factor RimP (151 aa).

It belongs to the RimP family.

The protein resides in the cytoplasm. Functionally, required for maturation of 30S ribosomal subunits. The polypeptide is Ribosome maturation factor RimP (Synechocystis sp. (strain ATCC 27184 / PCC 6803 / Kazusa)).